A 102-amino-acid polypeptide reads, in one-letter code: Large ribosomal subunit protein bL21 (102 aa).

The protein belongs to the bacterial ribosomal protein bL21 family. Part of the 50S ribosomal subunit. Contacts protein L20.

Its function is as follows. This protein binds to 23S rRNA in the presence of protein L20. The chain is Large ribosomal subunit protein bL21 from Geobacter sulfurreducens (strain ATCC 51573 / DSM 12127 / PCA).